A 495-amino-acid chain; its full sequence is Probable leucine aminopeptidase 2 (495 aa).

Residues 1–21 (MKSQLLSLAVAVTTISQGVVG) form the signal peptide. Residues 130-216 (MAELVVAKNN…SQEDGKNLAT (87 aa)) form the PA domain. N-linked (GlcNAc...) asparagine glycosylation is found at Asn142 and Asn235. Positions 259 and 271 each coordinate Zn(2+). An N-linked (GlcNAc...) asparagine glycan is attached at Asn272. Glu303 serves as the catalytic Proton acceptor. The Zn(2+) site is built by Glu304 and Asp332. Asn352 is a glycosylation site (N-linked (GlcNAc...) asparagine). His430 contributes to the Zn(2+) binding site.

The protein belongs to the peptidase M28 family. M28A subfamily. In terms of assembly, monomer. The cofactor is Zn(2+).

It localises to the secreted. Its function is as follows. Extracellular aminopeptidase that releases a wide variety of amino acids from natural peptides and contributes to pathogenicity. This is Probable leucine aminopeptidase 2 (LAP2) from Trichophyton verrucosum (strain HKI 0517).